The sequence spans 458 residues: tRNA modification GTPase MnmE (458 aa).

Residues R26, E88, and R127 each coordinate (6S)-5-formyl-5,6,7,8-tetrahydrofolate. In terms of domain architecture, TrmE-type G spans G224–F378. K(+) is bound at residue N234. GTP is bound by residues N234–S239, T253–T259, and D278–G281. Residue S238 coordinates Mg(2+). Residues T253, I255, and T258 each contribute to the K(+) site. T259 contacts Mg(2+). (6S)-5-formyl-5,6,7,8-tetrahydrofolate is bound at residue K458.

The protein belongs to the TRAFAC class TrmE-Era-EngA-EngB-Septin-like GTPase superfamily. TrmE GTPase family. As to quaternary structure, homodimer. Heterotetramer of two MnmE and two MnmG subunits. K(+) serves as cofactor.

Its subcellular location is the cytoplasm. Exhibits a very high intrinsic GTPase hydrolysis rate. Involved in the addition of a carboxymethylaminomethyl (cmnm) group at the wobble position (U34) of certain tRNAs, forming tRNA-cmnm(5)s(2)U34. The chain is tRNA modification GTPase MnmE from Streptococcus agalactiae serotype III (strain NEM316).